The following is a 270-amino-acid chain: Orotidine 5'-phosphate decarboxylase (270 aa).

Substrate is bound by residues D43, 65 to 67 (KTH), 96 to 105 (DRKFGDIGST), Y217, and R236. K98 (proton donor) is an active-site residue.

It belongs to the OMP decarboxylase family.

It catalyses the reaction orotidine 5'-phosphate + H(+) = UMP + CO2. Its pathway is pyrimidine metabolism; UMP biosynthesis via de novo pathway; UMP from orotate: step 2/2. In Aureobasidium pullulans (Black yeast), this protein is Orotidine 5'-phosphate decarboxylase (URA3).